A 316-amino-acid polypeptide reads, in one-letter code: Probable thioesterase lcsE (316 aa).

Belongs to the AMT4 thioesterase family.

The protein operates within secondary metabolite biosynthesis. Functionally, probable thioesterase; part of the gene cluster that mediates the biosynthesis of the lipopeptide antibiotics leucinostatins that show extensive biological activities, including antimalarial, antiviral, antibacterial, antifungal, and antitumor activities, as well as phytotoxic. Leucinostatin A contains nine amino acid residues, including the unusual amino acid 4-methyl-L-proline (MePro), 2-amino-6-hydroxy-4-methyl-8-oxodecanoic acid (AHyMeOA), 3-hydroxyleucine (HyLeu), alpha-aminoisobutyric acid (AIB), beta-Ala, a 4-methylhex-2-enoic acid at the N-terminus as well as a N1,N1-dimethylpropane-1,2-diamine (DPD) at the C-terminus. The biosynthesis of leucinostatins is probably initiated with the assembly of 4-methylhex-2-enoic acid by a reducing PKS. Two reducing polyketide synthases, lcsB and lcsC, have been identified in the cluster and it is not clear which is the one that assembles 4-methylhex-2-enoic acid since both contain KS, AT, DH, cMT, ER, KR and ACP domains. The polyketide residue might be transferred to the NRPS lcsA, mediated by two additional enzymes, the acyl-CoA ligase lcsD and the thioesterase lcsE. The linear polyketide carboxylic acid, which is released from PKS, is converted to a CoA thioester by lcsD, and then lcsE hydrolyzes the thiol bond and shuttles the polyketide intermediate to lcsA. The C domain of the first module catalyzed the condensation of 4-methylhex-2-enoic acid and MePro carried by domain A1, followed by successive condensations of nine amino acids to trigger the elongation of the linear peptide. A5 and A6 domains of lcsA are proposed to incorporate leucine, A2 AHyMeOA, and A3 incorporates HyLeu. A4, A7 and A8 incorporate AIB. The AHyMeOA in leucinostatin A activated by the A2 might be produced by the second PKS (lcsB or lcsC) present within the cluster. The MePro is probably produced via leucine cyclization and may originate from a separate pathway, independent of the cluster. Another nonproteinogenic amino acid, beta-Ala, could be produced by an aspartic acid decarboxylase also localized outside of the cluster. Two candidates are VFPBJ_01400 and VFPBJ_10476. The final peptide scaffold may be released by the NAD(P)H-dependent thioester reductase (TE) at the C-terminal region of lcsA. Transamination of the lcsA product by the transaminase lcsP may produce DPD at the C-terminus. Further hydroxylation steps performed alternatively by the cytochrome P450 monooxygenases lcsI, lcsK and lcsN then yield the non-methylated leucinostatins precursor. It is also possible that leucines can be hydroxylated prior to their incorporation into the peptide. Varying extents of methylation then lead to the formation of leucinostatins A and B. This Purpureocillium lilacinum (Paecilomyces lilacinus) protein is Probable thioesterase lcsE.